Consider the following 358-residue polypeptide: Heme A synthase 1 (358 aa).

Helical transmembrane passes span 11 to 31, 98 to 117, 123 to 143, 159 to 179, and 199 to 219; these read LVGT…VGGG, WGRL…RLRG, LTAW…MGWY, LYLG…LWTA, and LLSV…LVAA. Heme is bound at residue histidine 262. 3 helical membrane-spanning segments follow: residues 264–284, 292–312, and 315–335; these read VAAT…LRAP, LFLL…STLV, and MAEL…ACIA. Residue histidine 322 coordinates heme.

This sequence belongs to the COX15/CtaA family. Type 2 subfamily. As to quaternary structure, interacts with CtaB. Requires heme b as cofactor.

Its subcellular location is the cell membrane. It carries out the reaction Fe(II)-heme o + 2 A + H2O = Fe(II)-heme a + 2 AH2. The protein operates within porphyrin-containing compound metabolism; heme A biosynthesis; heme A from heme O: step 1/1. Its function is as follows. Catalyzes the conversion of heme O to heme A by two successive hydroxylations of the methyl group at C8. The first hydroxylation forms heme I, the second hydroxylation results in an unstable dihydroxymethyl group, which spontaneously dehydrates, resulting in the formyl group of heme A. In Acidiphilium cryptum (strain JF-5), this protein is Heme A synthase 1.